We begin with the raw amino-acid sequence, 338 residues long: Legumin B (338 aa).

The segment at 16–162 (SLNTKEDTAK…RQHSKGRKNG (147 aa)) is disordered. A compositionally biased stretch (basic and acidic residues) spans 18–44 (NTKEDTAKRLRSPQDERGQIVKVEDGL). Composition is skewed to acidic residues over residues 82–92 (DEDEDEEEEEE) and 136–150 (EEEE…EEEE). The Cupin type-1 domain occupies 174–321 (ENIARPSRGD…AFGLRHSQVA (148 aa)).

It belongs to the 11S seed storage protein (globulins) family. As to quaternary structure, hexamer; each subunit is composed of an acidic and a basic chain derived from a single precursor and linked by a disulfide bond.

Its function is as follows. This protein found in the seeds of many leguminous and non-leguminous plants is the source of sulfur-containing amino acids in seed meals. The polypeptide is Legumin B (LEGB) (Pisum sativum (Garden pea)).